A 472-amino-acid chain; its full sequence is uncharacterized protein (472 aa).

This sequence to B.subtilis YcdC.

This is an uncharacterized protein from Bacillus subtilis (strain 168).